A 119-amino-acid chain; its full sequence is Small ribosomal subunit protein bS16 (119 aa).

Residues 96–107 (RKKRRAYRQRRS) show a composition bias toward basic residues. The tract at residues 96-119 (RKKRRAYRQRRSTQREEAAKDATK) is disordered. The segment covering 108 to 119 (TQREEAAKDATK) has biased composition (basic and acidic residues).

This sequence belongs to the bacterial ribosomal protein bS16 family.

This is Small ribosomal subunit protein bS16 from Chlamydia pneumoniae (Chlamydophila pneumoniae).